Here is a 227-residue protein sequence, read N- to C-terminus: Enolase-phosphatase E1 (227 aa).

2 residues coordinate Mg(2+): D12 and E14. Substrate is bound by residues 118–119 (SS) and K159. D186 serves as a coordination point for Mg(2+).

It belongs to the HAD-like hydrolase superfamily. MasA/MtnC family. Monomer. Mg(2+) serves as cofactor.

It is found in the cytoplasm. Its subcellular location is the nucleus. It catalyses the reaction 5-methylsulfanyl-2,3-dioxopentyl phosphate + H2O = 1,2-dihydroxy-5-(methylsulfanyl)pent-1-en-3-one + phosphate. It participates in amino-acid biosynthesis; L-methionine biosynthesis via salvage pathway; L-methionine from S-methyl-5-thio-alpha-D-ribose 1-phosphate: step 3/6. Its pathway is amino-acid biosynthesis; L-methionine biosynthesis via salvage pathway; L-methionine from S-methyl-5-thio-alpha-D-ribose 1-phosphate: step 4/6. Bifunctional enzyme that catalyzes the enolization of 2,3-diketo-5-methylthiopentyl-1-phosphate (DK-MTP-1-P) into the intermediate 2-hydroxy-3-keto-5-methylthiopentenyl-1-phosphate (HK-MTPenyl-1-P), which is then dephosphorylated to form the acireductone 1,2-dihydroxy-3-keto-5-methylthiopentene (DHK-MTPene). This Vanderwaltozyma polyspora (strain ATCC 22028 / DSM 70294 / BCRC 21397 / CBS 2163 / NBRC 10782 / NRRL Y-8283 / UCD 57-17) (Kluyveromyces polysporus) protein is Enolase-phosphatase E1.